The sequence spans 1132 residues: Error-prone DNA polymerase (1132 aa).

The protein belongs to the DNA polymerase type-C family. DnaE2 subfamily.

The protein resides in the cytoplasm. The catalysed reaction is DNA(n) + a 2'-deoxyribonucleoside 5'-triphosphate = DNA(n+1) + diphosphate. Its function is as follows. DNA polymerase involved in damage-induced mutagenesis and translesion synthesis (TLS). It is not the major replicative DNA polymerase. This chain is Error-prone DNA polymerase, found in Anaeromyxobacter dehalogenans (strain 2CP-C).